The primary structure comprises 556 residues: Urocanate hydratase (556 aa).

NAD(+)-binding positions include 52–53 (GG), glutamine 130, 176–178 (GMG), glutamate 196, arginine 201, 242–243 (NA), 263–267 (QTSAH), 273–274 (YL), and tyrosine 322. Residue cysteine 410 is part of the active site. Position 492 (glycine 492) interacts with NAD(+).

This sequence belongs to the urocanase family. The cofactor is NAD(+).

The protein resides in the cytoplasm. The catalysed reaction is 4-imidazolone-5-propanoate = trans-urocanate + H2O. The protein operates within amino-acid degradation; L-histidine degradation into L-glutamate; N-formimidoyl-L-glutamate from L-histidine: step 2/3. Catalyzes the conversion of urocanate to 4-imidazolone-5-propionate. The chain is Urocanate hydratase from Bradyrhizobium sp. (strain ORS 278).